We begin with the raw amino-acid sequence, 295 residues long: Phosphoribosylaminoimidazole-succinocarboxamide synthase (295 aa).

The protein belongs to the SAICAR synthetase family.

It carries out the reaction 5-amino-1-(5-phospho-D-ribosyl)imidazole-4-carboxylate + L-aspartate + ATP = (2S)-2-[5-amino-1-(5-phospho-beta-D-ribosyl)imidazole-4-carboxamido]succinate + ADP + phosphate + 2 H(+). It functions in the pathway purine metabolism; IMP biosynthesis via de novo pathway; 5-amino-1-(5-phospho-D-ribosyl)imidazole-4-carboxamide from 5-amino-1-(5-phospho-D-ribosyl)imidazole-4-carboxylate: step 1/2. The protein is Phosphoribosylaminoimidazole-succinocarboxamide synthase of Desulforapulum autotrophicum (strain ATCC 43914 / DSM 3382 / VKM B-1955 / HRM2) (Desulfobacterium autotrophicum).